The sequence spans 111 residues: Small ribosomal subunit protein bS18 (111 aa).

The tract at residues 1 to 32 is disordered; that stretch reads MDLENTENVENNNNNEEEVKAKGERKAHFNKE. The segment covering 17–32 has biased composition (basic and acidic residues); that stretch reads EEVKAKGERKAHFNKE.

It belongs to the bacterial ribosomal protein bS18 family. In terms of assembly, part of the 30S ribosomal subunit. Forms a tight heterodimer with protein bS6.

Functionally, binds as a heterodimer with protein bS6 to the central domain of the 16S rRNA, where it helps stabilize the platform of the 30S subunit. This chain is Small ribosomal subunit protein bS18, found in Brachyspira hyodysenteriae (strain ATCC 49526 / WA1).